The sequence spans 321 residues: Outer envelope protein 36, chloroplastic (321 aa).

Belongs to the OEP80 (TC 1.B.33.2) family. As to expression, expressed in germinating seeds.

Its subcellular location is the plastid. It is found in the chloroplast outer membrane. Functionally, may play a role during plastid development. This Arabidopsis thaliana (Mouse-ear cress) protein is Outer envelope protein 36, chloroplastic.